The sequence spans 144 residues: MRLNTLSPAEGSKKAGKRLGRGIGSGLGKTGGRGHKGQKSRSGGGVRRGFEGGQMPLYRRLPKFGFTSRKAMITAEIRLSDLAHVEGDVVDLNALKAANIIGVQIEFAKVILSGEVTRPVTVRGLRVTKGARAAIEAAGGKIEE.

The interval 1–54 is disordered; the sequence is MRLNTLSPAEGSKKAGKRLGRGIGSGLGKTGGRGHKGQKSRSGGGVRRGFEGGQ. Residues 21–31 are compositionally biased toward gly residues; that stretch reads RGIGSGLGKTG.

This sequence belongs to the universal ribosomal protein uL15 family. In terms of assembly, part of the 50S ribosomal subunit.

Its function is as follows. Binds to the 23S rRNA. The polypeptide is Large ribosomal subunit protein uL15 (Klebsiella pneumoniae (strain 342)).